The sequence spans 477 residues: Maternal protein exuperantia-2 (477 aa).

A compositionally biased stretch (basic and acidic residues) spans 196–209 (KDGNSTKEDEHENP). 2 disordered regions span residues 196-226 (KDGN…NQKQ) and 384-477 (TIKP…FADI). The span at 385–402 (IKPRCKRSGNGTRRRNRA) shows a compositional bias: basic residues.

Its function is as follows. Ensures the proper localization of the mRNA of the bicoid gene to the anterior regions of the oocyte thus playing a fundamental role in the establishment of the polarity of the oocyte. May bind the bcd mRNA. The sequence is that of Maternal protein exuperantia-2 (exu2) from Drosophila pseudoobscura pseudoobscura (Fruit fly).